A 544-amino-acid chain; its full sequence is uncharacterized protein (544 aa).

The next 12 membrane-spanning stretches (helical) occupy residues 41–61 (FSAWTSFCVSFSVLGLLPSFA), 71–91 (AGTPAMVWGWLIAMVFVQCVA), 106–126 (GLYYAAAVLAPKGWGPFAAWL), 166–186 (YQIFLLAVAAMIAQGFISSMP), 196–216 (WGTVLNMLFLAIVMITVLAVA), 240–260 (WSNGMAMLMSFAGVIWTMSGY), 280–300 (AIVMTSAFGGIVGWLLNLCIA), 332–352 (VALTSLTVICSFMMGQGCMVA), 391–411 (VVGILCCLLIFAGEAAINAIF), 413–433 (VGAIAAFVAFTTPIFLRVFFV), 451–471 (INGYAACAFVLLMVPILCFPQ), and 484–504 (WTCVVFGGPMLMVLIWWFVSA).

Belongs to the amino acid-polyamine-organocation (APC) superfamily.

It localises to the membrane. This is an uncharacterized protein from Schizosaccharomyces pombe (strain 972 / ATCC 24843) (Fission yeast).